We begin with the raw amino-acid sequence, 110 residues long: Thioredoxin (110 aa).

The Thioredoxin domain maps to 3–108 (KPIEVHDSDF…YREIFDKVLA (106 aa)). A disulfide bridge connects residues cysteine 32 and cysteine 35. Lysine 105 bears the N6,N6-dimethyllysine; alternate mark. Lysine 105 carries the N6-methyllysine; alternate modification.

In terms of biological role, participates in various redox reactions through the reversible oxidation of its active center dithiol to a disulfide and catalyzes dithiol-disulfide exchange reactions. In Chloroflexus aurantiacus (strain ATCC 29366 / DSM 635 / J-10-fl), this protein is Thioredoxin (trxA).